A 586-amino-acid chain; its full sequence is Chaperonin 60 subunit alpha 1, chloroplastic (586 aa).

A chloroplast-targeting transit peptide spans 1–46 (MASANALSSASVLCSSRQSKLGGGNQQQGQRVSYNKRTIRRFSVRA). S90 carries the post-translational modification Phosphoserine.

This sequence belongs to the chaperonin (HSP60) family. Part of the Cpn60 complex composed of 7 alpha and 7 beta subunits. This complex shows ATPase activity. The Cpn60 complex interacts with the Cpn10 complex. As to expression, expressed in leaves, stems, siliques and flowers.

It localises to the plastid. The protein localises to the chloroplast. Functionally, binds RuBisCO small and large subunits and is implicated in the assembly of the enzyme oligomer. Involved in protein assisted folding. Required for proper chloroplast development. The chain is Chaperonin 60 subunit alpha 1, chloroplastic (CPN60A1) from Arabidopsis thaliana (Mouse-ear cress).